Here is a 66-residue protein sequence, read N- to C-terminus: KEGYIVNSYTGCKYECFKLGDNDYCLRECRQQYGKGAGGYCYAFGCWCTHLYEQAVVWPLKNKTCN.

The region spanning 1-66 (KEGYIVNSYT…VWPLKNKTCN (66 aa)) is the LCN-type CS-alpha/beta domain. 4 disulfide bridges follow: C12–C65, C16–C41, C25–C46, and C29–C48. N66 is subject to Asparagine amide.

Belongs to the long (4 C-C) scorpion toxin superfamily. Sodium channel inhibitor family. Beta subfamily. Expressed by the venom gland.

It localises to the secreted. In terms of biological role, beta toxins bind voltage-independently at site-4 of sodium channels (Nav) and shift the voltage of activation toward more negative potentials thereby affecting sodium channel activation and promoting spontaneous and repetitive firing. The chain is Beta-toxin Chui2 from Centruroides huichol (Scorpion).